Consider the following 322-residue polypeptide: 4-hydroxythreonine-4-phosphate dehydrogenase (322 aa).

Threonine 132 contacts substrate. 3 residues coordinate a divalent metal cation: histidine 160, histidine 205, and histidine 260. Lysine 268, asparagine 277, and arginine 286 together coordinate substrate.

It belongs to the PdxA family. Homodimer. Requires Zn(2+) as cofactor. Mg(2+) is required as a cofactor. The cofactor is Co(2+).

The protein localises to the cytoplasm. It carries out the reaction 4-(phosphooxy)-L-threonine + NAD(+) = 3-amino-2-oxopropyl phosphate + CO2 + NADH. It functions in the pathway cofactor biosynthesis; pyridoxine 5'-phosphate biosynthesis; pyridoxine 5'-phosphate from D-erythrose 4-phosphate: step 4/5. Its function is as follows. Catalyzes the NAD(P)-dependent oxidation of 4-(phosphooxy)-L-threonine (HTP) into 2-amino-3-oxo-4-(phosphooxy)butyric acid which spontaneously decarboxylates to form 3-amino-2-oxopropyl phosphate (AHAP). The sequence is that of 4-hydroxythreonine-4-phosphate dehydrogenase from Xanthomonas campestris pv. campestris (strain 8004).